A 220-amino-acid chain; its full sequence is Octanoyltransferase (220 aa).

The 189-residue stretch at 29–217 (GRAPEMIWLL…CFEETFGPLP (189 aa)) folds into the BPL/LPL catalytic domain. Substrate-binding positions include 68 to 75 (RGGQYTYH), 148 to 150 (AIG), and 161 to 163 (GLS). Catalysis depends on cysteine 179, which acts as the Acyl-thioester intermediate.

Belongs to the LipB family.

It localises to the cytoplasm. The catalysed reaction is octanoyl-[ACP] + L-lysyl-[protein] = N(6)-octanoyl-L-lysyl-[protein] + holo-[ACP] + H(+). Its pathway is protein modification; protein lipoylation via endogenous pathway; protein N(6)-(lipoyl)lysine from octanoyl-[acyl-carrier-protein]: step 1/2. Catalyzes the transfer of endogenously produced octanoic acid from octanoyl-acyl-carrier-protein onto the lipoyl domains of lipoate-dependent enzymes. Lipoyl-ACP can also act as a substrate although octanoyl-ACP is likely to be the physiological substrate. The protein is Octanoyltransferase of Dinoroseobacter shibae (strain DSM 16493 / NCIMB 14021 / DFL 12).